Here is a 1071-residue protein sequence, read N- to C-terminus: Serine/threonine-protein phosphatase 6 regulatory ankyrin repeat subunit C (1071 aa).

28 ANK repeats span residues 7 to 36, 40 to 69, 73 to 102, 106 to 135, 139 to 168, 172 to 201, 205 to 234, 238 to 267, 271 to 301, 305 to 334, 338 to 367, 371 to 400, 422 to 451, 455 to 484, 488 to 539, 543 to 573, 578 to 607, 611 to 640, 645 to 674, 681 to 710, 714 to 743, 747 to 776, 784 to 814, 816 to 845, 852 to 881, 885 to 915, 919 to 951, and 955 to 984; these read SDQPPLVQAIFNRNADEVKLFLHKKDEVNA, ERRTPLHAAAWLGDVHIMDLLISAGANVNA, VWLTPLHRAAASRNERAVGLLLRKGADVTA, YWQTPLHIAAANRATRCVETLLPHVSSLNM, TGRAPLHHAAQSGYQEMVKLLLNKGANLSA, KDRQPIHWAAYLGHLEVVKLLVSQGSDKSC, RGYTPLHAAAASGHVDVVKYLLRNGAEIDE, FGNTALHVACYTGQEAVANELVNRGANVNQ, RGYTPLHLAAVSTNGALCLELLVNNGADVNM, EGKSPLHMAAIHGRFTRSQILIQNGGEIDC, YGNTPLHVAAKYGHELLISTLMTNGADTAR, HGMFPLHLAVLYGSSDCCRKLLSSGQLYSI, FGRTCLHAAASGGNIECLNLLLSSGADMNK, FGRTPLHYAAANGRYQCVVVLVGAGAEVNE, SGCT…DPCL, KGYSAVHYAAAHGNKQNLELLLEMCFNTLGD, GSISPLHLAVESGHWECVTVLIESGVCVDV, VGRSVLYLASQRGHSRCVELLLSQSASCLL, SKWGPLHVAAANGHSECLRMLLCSEGGADL, EGQTPLMLAVLGGHTDCVHLLLERGACPDM, RGRTALHRGAVMGREDCLTALLSHNVSVLS, QGRSALHLAASCGHADILSNLLSAADHSQP, HGYTPAHWAAYHGHEDCLEVLLELKPCSIQE, NPFTPLHCALINGHSGSAELLLESSVCNSL, KGRTPLHAAAVAEDVAGLQLVLRQGADIDA, SGRSALMVAADYGQSGAVALLLHRAKADLSL, NKNTALHLACSKAHEMCAMLILKEIHNPILINA, and MLQMPLHIAARNGLATVVQALLNRGATVLA.

In terms of assembly, protein phosphatase 6 (PP6) holoenzyme is proposed to be a heterotrimeric complex formed by the catalytic subunit, a SAPS domain-containing subunit (PP6R) and an ankyrin repeat-domain containing regulatory subunit (ARS).

Functionally, putative regulatory subunit of protein phosphatase 6 (PP6) that may be involved in the recognition of phosphoprotein substrates. This Danio rerio (Zebrafish) protein is Serine/threonine-protein phosphatase 6 regulatory ankyrin repeat subunit C (ankrd52).